The sequence spans 438 residues: MDSWTSPDVPALPFTAEGPRVHDTARGAITPLTPRPGQEAGLYVCGITPYDATHLGHAATYLTFDLVNRALRAAGHPVRFVQNVTDVDEPLLERAERDGVHWEELASREIQLFRDDMAALRIIAPDAYVGAVEGIPSDVAAIRAMLESGRAYRVPAEDAAADAGESPADVYLDLAQVPTFGEVSHWTPTQMMEVFADRGGDPDRAGKRDRLDPLLWRAHREGEPHWEGGSLGAGRPGWHIECTTIARDHLGTPFLVQGGGDDLVFPHHEMSAAQTRALTDDAFAEHYVHQAMVGLDGEKMSKSKGNLVLVSRLRAAGEDPAAIRLALLSQHYRTAWEWTDAHLEAARQRLDRWRHAAQTATASPSTADAEDAPAGDAVARQLAERIADDLDAPGALAVVDRWADAVLGEQTGAAAAAARAEARGVRTAVDALLGIDLG.

Residues 1 to 27 are disordered; it reads MDSWTSPDVPALPFTAEGPRVHDTARG. Residue cysteine 45 coordinates Zn(2+). L-cysteinyl-5'-AMP-binding positions include 45-48, threonine 60, and 83-85; these read CGIT and NVT. A 'HIGH' region motif is present at residues 47-57; the sequence is ITPYDATHLGH. Positions 197-202 match the 'ERGGDP' region motif; that stretch reads DRGGDP. Tryptophan 238 serves as a coordination point for L-cysteinyl-5'-AMP. Cysteine 242 contacts Zn(2+). 260–262 lines the L-cysteinyl-5'-AMP pocket; the sequence is GDD. Histidine 267 lines the Zn(2+) pocket. Valine 293 serves as a coordination point for L-cysteinyl-5'-AMP. Residues 299–303 carry the 'KMSKS' region motif; that stretch reads KMSKS.

Belongs to the class-I aminoacyl-tRNA synthetase family. MshC subfamily. In terms of assembly, monomer. Requires Zn(2+) as cofactor.

The catalysed reaction is 1D-myo-inositol 2-amino-2-deoxy-alpha-D-glucopyranoside + L-cysteine + ATP = 1D-myo-inositol 2-(L-cysteinylamino)-2-deoxy-alpha-D-glucopyranoside + AMP + diphosphate + H(+). Its function is as follows. Catalyzes the ATP-dependent condensation of GlcN-Ins and L-cysteine to form L-Cys-GlcN-Ins. This Kytococcus sedentarius (strain ATCC 14392 / DSM 20547 / JCM 11482 / CCUG 33030 / NBRC 15357 / NCTC 11040 / CCM 314 / 541) (Micrococcus sedentarius) protein is L-cysteine:1D-myo-inositol 2-amino-2-deoxy-alpha-D-glucopyranoside ligase.